The primary structure comprises 143 residues: Crossover junction endodeoxyribonuclease Hjc (143 aa).

E12 lines the Mg(2+) pocket. The active site involves S32. Mg(2+)-binding residues include D42 and E55.

This sequence belongs to the Holliday junction resolvase Hjc family. Homodimer. Mg(2+) serves as cofactor.

The enzyme catalyses Endonucleolytic cleavage at a junction such as a reciprocal single-stranded crossover between two homologous DNA duplexes (Holliday junction).. A structure-specific endonuclease that resolves Holliday junction (HJ) intermediates during genetic recombination. Cleaves 4-way DNA junctions introducing paired nicks in opposing strands, leaving a 5'-terminal phosphate and a 3'-terminal hydroxyl group that are subsequently ligated to produce recombinant products. In terms of biological role, hjc, Hjm (Hel308) and PINA coordinate HJ migration and cleavage of replication forks in a coordinated way. The sequence is that of Crossover junction endodeoxyribonuclease Hjc from Saccharolobus islandicus (strain REY15A) (Sulfolobus islandicus).